A 123-amino-acid polypeptide reads, in one-letter code: Large ribosomal subunit protein uL14 (123 aa).

It belongs to the universal ribosomal protein uL14 family. Part of the 50S ribosomal subunit. Forms a cluster with proteins L3 and L19. In the 70S ribosome, L14 and L19 interact and together make contacts with the 16S rRNA in bridges B5 and B8.

Binds to 23S rRNA. Forms part of two intersubunit bridges in the 70S ribosome. In Blochmanniella floridana, this protein is Large ribosomal subunit protein uL14.